The following is a 265-amino-acid chain: Putative 2-aminoethylphosphonate transport system permease protein PhnV (265 aa).

6 helical membrane passes run 13–33 (GVVA…VILM), 69–89 (LTIG…AALA), 104–124 (VFYL…LVAF), 131–151 (MNGT…AFTF), 185–205 (LPLL…LSMG), and 233–253 (NIAD…LLMM). An ABC transmembrane type-1 domain is found at 65 to 253 (LLASLTIGFC…LVAITLLLMM (189 aa)).

This sequence belongs to the binding-protein-dependent transport system permease family.

It is found in the cell inner membrane. In terms of biological role, probably part of the PhnSTUV complex (TC 3.A.1.11.5) involved in 2-aminoethylphosphonate import. Probably responsible for the translocation of the substrate across the membrane. The sequence is that of Putative 2-aminoethylphosphonate transport system permease protein PhnV (phnV) from Salmonella choleraesuis (strain SC-B67).